The sequence spans 199 residues: LIM domain-containing protein E (199 aa).

Residues 5–65 (VKCGACAKTA…PVHTPKVSAT (61 aa)) form the LIM zinc-binding domain. Residues 134–199 (YAVFGADGQP…EEEQQYEEEQ (66 aa)) form a disordered region. Composition is skewed to low complexity over residues 146 to 155 (EQQEQQQYTE) and 163 to 174 (EEQQYQEEQQQY). The span at 175–199 (QEEEQQYQEEEQQYQEEEQQYEEEQ) shows a compositional bias: acidic residues.

In terms of assembly, may interact with rac1A.

It localises to the cytoplasm. The protein localises to the cell cortex. The protein resides in the nucleus. It is found in the cell projection. Its subcellular location is the lamellipodium. It localises to the filopodium. The protein localises to the cytoskeleton. Associates with the actin cytoskeleton and may regulate actin polymerization in lamellipodia, through a rac1-dependent signaling pathway. May play a role in cell motility. Involved in cytokinesis by regulating the microtubule system and linking it to the cortical actin network. The sequence is that of LIM domain-containing protein E (limE) from Dictyostelium discoideum (Social amoeba).